A 451-amino-acid chain; its full sequence is Bifunctional protein GlmU (451 aa).

The interval 1-230 (MNNPIAAIVL…PADVGGINSR (230 aa)) is pyrophosphorylase. UDP-N-acetyl-alpha-D-glucosamine-binding positions include 10-13 (LAAG), Lys-24, Gln-74, 79-80 (GT), 102-104 (YGD), Gly-142, Glu-156, Asn-171, and Asn-228. Asp-104 contributes to the Mg(2+) binding site. A Mg(2+)-binding site is contributed by Asn-228. A linker region spans residues 231 to 251 (AELAAAEAQWQAFRREEAMAA). The N-acetyltransferase stretch occupies residues 252 to 451 (GASLRAPETV…RKKKAAEQKK (200 aa)). UDP-N-acetyl-alpha-D-glucosamine is bound by residues Arg-317 and Lys-335. The Proton acceptor role is filled by His-347. Residues Tyr-350 and Asn-361 each coordinate UDP-N-acetyl-alpha-D-glucosamine. Acetyl-CoA contacts are provided by residues Ala-364, 370 to 371 (NY), Ser-389, Ala-407, and Arg-424.

In the N-terminal section; belongs to the N-acetylglucosamine-1-phosphate uridyltransferase family. The protein in the C-terminal section; belongs to the transferase hexapeptide repeat family. In terms of assembly, homotrimer. Mg(2+) is required as a cofactor.

It is found in the cytoplasm. The enzyme catalyses alpha-D-glucosamine 1-phosphate + acetyl-CoA = N-acetyl-alpha-D-glucosamine 1-phosphate + CoA + H(+). The catalysed reaction is N-acetyl-alpha-D-glucosamine 1-phosphate + UTP + H(+) = UDP-N-acetyl-alpha-D-glucosamine + diphosphate. The protein operates within nucleotide-sugar biosynthesis; UDP-N-acetyl-alpha-D-glucosamine biosynthesis; N-acetyl-alpha-D-glucosamine 1-phosphate from alpha-D-glucosamine 6-phosphate (route II): step 2/2. It participates in nucleotide-sugar biosynthesis; UDP-N-acetyl-alpha-D-glucosamine biosynthesis; UDP-N-acetyl-alpha-D-glucosamine from N-acetyl-alpha-D-glucosamine 1-phosphate: step 1/1. It functions in the pathway bacterial outer membrane biogenesis; LPS lipid A biosynthesis. Functionally, catalyzes the last two sequential reactions in the de novo biosynthetic pathway for UDP-N-acetylglucosamine (UDP-GlcNAc). The C-terminal domain catalyzes the transfer of acetyl group from acetyl coenzyme A to glucosamine-1-phosphate (GlcN-1-P) to produce N-acetylglucosamine-1-phosphate (GlcNAc-1-P), which is converted into UDP-GlcNAc by the transfer of uridine 5-monophosphate (from uridine 5-triphosphate), a reaction catalyzed by the N-terminal domain. This is Bifunctional protein GlmU from Sphingopyxis alaskensis (strain DSM 13593 / LMG 18877 / RB2256) (Sphingomonas alaskensis).